Here is a 260-residue protein sequence, read N- to C-terminus: Shikimate dehydrogenase (NADP(+)) (260 aa).

Shikimate is bound by residues 14 to 16 (SAS) and Thr-60. The Proton acceptor role is filled by Lys-64. Shikimate is bound by residues Asn-85 and Asp-100. Residues 121 to 125 (GAGGA), 145 to 150 (NRTYER), and Phe-201 each bind NADP(+). Shikimate is bound at residue Tyr-203. Gly-225 contacts NADP(+).

The protein belongs to the shikimate dehydrogenase family. In terms of assembly, homodimer.

The catalysed reaction is shikimate + NADP(+) = 3-dehydroshikimate + NADPH + H(+). The protein operates within metabolic intermediate biosynthesis; chorismate biosynthesis; chorismate from D-erythrose 4-phosphate and phosphoenolpyruvate: step 4/7. Functionally, involved in the biosynthesis of the chorismate, which leads to the biosynthesis of aromatic amino acids. Catalyzes the reversible NADPH linked reduction of 3-dehydroshikimate (DHSA) to yield shikimate (SA). The chain is Shikimate dehydrogenase (NADP(+)) from Pyrobaculum neutrophilum (strain DSM 2338 / JCM 9278 / NBRC 100436 / V24Sta) (Thermoproteus neutrophilus).